The following is a 275-amino-acid chain: HUWE1-associated protein modifying stress responses (275 aa).

The span at 32 to 44 (AEQDEQLSPELQE) shows a compositional bias: acidic residues. Disordered stretches follow at residues 32-51 (AEQD…AAAQ), 155-181 (RNSR…SSVE), 204-228 (SVRS…RRNG), and 250-275 (GTRK…NRML). The residue at position 167 (S167) is a Phosphoserine. Residues 172-181 (TSTETSSSVE) are compositionally biased toward low complexity. Residues 204-221 (SVRSSTPGSPTHVSSGPN) show a composition bias toward polar residues. A Phosphoserine modification is found at S212.

The protein belongs to the HAPSTR1 family. In terms of assembly, homooligomer. Heterooligomer with HAPSTR2; the interaction is direct and stabilizes HAPSTR1. Interacts with HUWE1. In terms of processing, ubiquitinated by HUWE1. Promotes HAPSTR1 degradation through polyubiquitination.

It localises to the nucleus. The protein resides in the cytoplasm. Its function is as follows. Acts as a central player within a network of stress response pathways promoting cellular adaptability. The E3 ligase HUWE1 assists HAPSTR1 in controlling stress signaling and in turn, HUWE1 feeds back to promote the degradation of HAPSTR1. HAPSTR1 represents a central coordination mechanism for stress response programs. Functions as a negative regulator of TP53/P53 in the cellular response to telomere erosion and probably also DNA damage. May attenuate p53/TP53 activation through the E3 ubiquitin ligase HUWE1. In Mus musculus (Mouse), this protein is HUWE1-associated protein modifying stress responses.